The chain runs to 375 residues: CCA-adding enzyme (375 aa).

Residues Gly8 and Arg11 each coordinate ATP. Residues Gly8 and Arg11 each contribute to the CTP site. The Mg(2+) site is built by Asp21 and Asp23. The ATP site is built by Arg91, Arg137, and Arg140. Positions 91, 137, and 140 each coordinate CTP.

The protein belongs to the tRNA nucleotidyltransferase/poly(A) polymerase family. Bacterial CCA-adding enzyme type 2 subfamily. The cofactor is Mg(2+).

The enzyme catalyses a tRNA precursor + 2 CTP + ATP = a tRNA with a 3' CCA end + 3 diphosphate. It catalyses the reaction a tRNA with a 3' CCA end + 2 CTP + ATP = a tRNA with a 3' CCACCA end + 3 diphosphate. Catalyzes the addition and repair of the essential 3'-terminal CCA sequence in tRNAs without using a nucleic acid template. Adds these three nucleotides in the order of C, C, and A to the tRNA nucleotide-73, using CTP and ATP as substrates and producing inorganic pyrophosphate. tRNA 3'-terminal CCA addition is required both for tRNA processing and repair. Also involved in tRNA surveillance by mediating tandem CCA addition to generate a CCACCA at the 3' terminus of unstable tRNAs. While stable tRNAs receive only 3'-terminal CCA, unstable tRNAs are marked with CCACCA and rapidly degraded. This is CCA-adding enzyme from Pseudomonas entomophila (strain L48).